A 225-amino-acid chain; its full sequence is MQGLAQTTMAVVPGGAPPSENSVIKSQMWNKNKEKFLKGEPKVLGAIQVMIAFINFSLGIIIILNRVSERFMSVLLLAPFWGSIMFIFSGSLSIAAGVKPTKAMIISSLSVNTISSVLAVAASIIGVISVISGVFRQFRSQPAIASLDVLMTILNMLEFCIAVSVSAFGCKASCCNSSEVLVVLPSNSAVTVTAPPMILQPLPPSECQGKNVPENLYRNQPGEIV.

Topologically, residues 1-42 are cytoplasmic; that stretch reads MQGLAQTTMAVVPGGAPPSENSVIKSQMWNKNKEKFLKGEPK. A helical membrane pass occupies residues 43–63; the sequence is VLGAIQVMIAFINFSLGIIII. At 64–73 the chain is on the extracellular side; that stretch reads LNRVSERFMS. The chain crosses the membrane as a helical span at residues 74–94; it reads VLLLAPFWGSIMFIFSGSLSI. Over 95 to 113 the chain is Cytoplasmic; it reads AAGVKPTKAMIISSLSVNT. A helical transmembrane segment spans residues 114-134; it reads ISSVLAVAASIIGVISVISGV. The Extracellular portion of the chain corresponds to 135–148; the sequence is FRQFRSQPAIASLD. Residues 149-169 form a helical membrane-spanning segment; sequence VLMTILNMLEFCIAVSVSAFG. Residues 170–225 are Cytoplasmic-facing; it reads CKASCCNSSEVLVVLPSNSAVTVTAPPMILQPLPPSECQGKNVPENLYRNQPGEIV.

It belongs to the MS4A family. As to expression, expressed in thymus, spleen, peripheral lymph node, liver, kidney, heart, colon, lung, and testes.

It localises to the membrane. Its function is as follows. May be involved in signal transduction as a component of a multimeric receptor complex. The chain is Membrane-spanning 4-domains subfamily A member 4D (Ms4a4d) from Mus musculus (Mouse).